The primary structure comprises 511 residues: Archaeal glutamate synthase [NADPH] (511 aa).

4Fe-4S ferredoxin-type domains lie at 15–44 and 46–75; these read FMIE…YDEE and DMMR…VKPH. Positions 24, 27, 30, 34, 55, 58, 61, and 65 each coordinate [4Fe-4S] cluster.

It belongs to the glutamate synthase family. Requires FMN as cofactor.

The catalysed reaction is 2 L-glutamate + NADP(+) = L-glutamine + 2-oxoglutarate + NADPH + H(+). This is Archaeal glutamate synthase [NADPH] from Archaeoglobus fulgidus (strain ATCC 49558 / DSM 4304 / JCM 9628 / NBRC 100126 / VC-16).